Reading from the N-terminus, the 468-residue chain is Putative ankyrin repeat protein R580 (468 aa).

6 ANK repeats span residues 12–41 (DYFD…TLID), 189–218 (VINK…EINC), 249–278 (CHFD…KINS), 336–365 (SFDN…NINF), 367–393 (NMPT…DLEI), and 394–423 (HGTL…KFSL).

The sequence is that of Putative ankyrin repeat protein R580 from Acanthamoeba polyphaga (Amoeba).